We begin with the raw amino-acid sequence, 458 residues long: 3-isopropylmalate dehydratase large subunit (458 aa).

3 residues coordinate [4Fe-4S] cluster: Cys339, Cys399, and Cys402.

It belongs to the aconitase/IPM isomerase family. LeuC type 1 subfamily. Heterodimer of LeuC and LeuD. [4Fe-4S] cluster serves as cofactor.

The catalysed reaction is (2R,3S)-3-isopropylmalate = (2S)-2-isopropylmalate. It functions in the pathway amino-acid biosynthesis; L-leucine biosynthesis; L-leucine from 3-methyl-2-oxobutanoate: step 2/4. Functionally, catalyzes the isomerization between 2-isopropylmalate and 3-isopropylmalate, via the formation of 2-isopropylmaleate. In Lactococcus lactis subsp. cremoris (strain MG1363), this protein is 3-isopropylmalate dehydratase large subunit.